Here is a 331-residue protein sequence, read N- to C-terminus: Adenosine deaminase (331 aa).

Positions 12 and 14 each coordinate Zn(2+). Positions 14, 16, and 170 each coordinate substrate. Zn(2+) is bound at residue His-197. Glu-200 serves as the catalytic Proton donor. Asp-278 is a binding site for Zn(2+). Position 279 (Asp-279) interacts with substrate.

It belongs to the metallo-dependent hydrolases superfamily. Adenosine and AMP deaminases family. Adenosine deaminase subfamily. The cofactor is Zn(2+).

It catalyses the reaction adenosine + H2O + H(+) = inosine + NH4(+). The enzyme catalyses 2'-deoxyadenosine + H2O + H(+) = 2'-deoxyinosine + NH4(+). Catalyzes the hydrolytic deamination of adenosine and 2-deoxyadenosine. The polypeptide is Adenosine deaminase (Shewanella baltica (strain OS185)).